A 432-amino-acid polypeptide reads, in one-letter code: Hexane cyclase pydB (432 aa).

An N-terminal signal peptide occupies residues 1-20 (MMHQSLGLGLVVFVAAPVVA). N-linked (GlcNAc...) asparagine glycosylation is found at Asn59, Asn78, Asn153, and Asn308.

Belongs to the Diels-Alderase family.

Its pathway is mycotoxin biosynthesis. Its function is as follows. Hexane cyclase; part of the gene cluster that mediates the biosynthesis of pyrrocidines, fungal natural products containing a macrocyclic para-cyclophane connected to a decahydrofluorene ring system that show potent antibiotic activities toward Gram-negative bacteria. Within the pathway, pydB functions synergistically with pydE, pydX and pydZ to form the cyclophane. The pathway begins with the PKS-NRPS pydA which, with the help of the trans-enoyl reductase pydC, synthesizes the polyketide-tyrosyl acyl thioester product which can be reductively off-loaded by the terminal reductase (R) domain in pydA. The alpha/beta hydrolase pydG is then required to catalyze the subsequent Knoevenagel condensation that affords the 3-pyrrolin-2-one ring, whereas the four proteins pydB, pydE, pydX and pydZ then function synergistically to form the cyclophane. PydB and the membrane-bound pydX and pydZ are lipid-binding proteins that can sequester and mold the pdyG product into the inverse S-shape. Binding of the medium chain reductase pydE to the complex would trigger the cascade oxidative cyclization. PydY is involved the Diels-Alder cycloaddition that forms the decahydrofluorene core. Additional non-enzymatic hydroxylation yields pyrrocidine A2 which can be further reduced into pyrrocidine B by an endogenous reductase. The polypeptide is Hexane cyclase pydB (Acremonium sp).